Consider the following 68-residue polypeptide: Molybdenum-pterin-binding protein 3 (68 aa).

A Mop domain is found at 2-68 (SISARNQLKG…IKSTDVMILA (67 aa)).

Functionally, binds one mole of molybdenum per mole of protein and contains a pterin. The sequence is that of Molybdenum-pterin-binding protein 3 (mopIII) from Clostridium pasteurianum.